The sequence spans 425 residues: Tyrosine--tRNA ligase (425 aa).

Tyr-34 contributes to the L-tyrosine binding site. The 'HIGH' region signature appears at 39–48 (PTADSLHVGN). Residues Tyr-171 and Gln-175 each contribute to the L-tyrosine site. The 'KMSKS' region signature appears at 231–235 (KYGKS). Lys-234 is a binding site for ATP. One can recognise an S4 RNA-binding domain in the interval 358–424 (APLVELLVHA…GKRTYTVVKI (67 aa)).

This sequence belongs to the class-I aminoacyl-tRNA synthetase family. TyrS type 1 subfamily. As to quaternary structure, homodimer.

Its subcellular location is the cytoplasm. It catalyses the reaction tRNA(Tyr) + L-tyrosine + ATP = L-tyrosyl-tRNA(Tyr) + AMP + diphosphate + H(+). Functionally, catalyzes the attachment of tyrosine to tRNA(Tyr) in a two-step reaction: tyrosine is first activated by ATP to form Tyr-AMP and then transferred to the acceptor end of tRNA(Tyr). This chain is Tyrosine--tRNA ligase, found in Opitutus terrae (strain DSM 11246 / JCM 15787 / PB90-1).